A 366-amino-acid polypeptide reads, in one-letter code: Melatonin receptor type 1A (366 aa).

Residues 1-45 lie on the Extracellular side of the membrane; it reads MAGRLWGSPGGTPKGNGSSALLNVSQAAPGAGDGVRPRPSWLAAT. Asn-16 and Asn-23 each carry an N-linked (GlcNAc...) asparagine glycan. The helical transmembrane segment at 46-66 threads the bilayer; the sequence is LASILIFTIVVDIVGNLLVVL. At 67 to 79 the chain is on the cytoplasmic side; sequence SVYRNKKLRNAGN. The helical transmembrane segment at 80–100 threads the bilayer; it reads VFVVSLAVADLLVAVYPYPLA. Residues 101-118 lie on the Extracellular side of the membrane; sequence LASIVNNGWSLSSLHCQL. Cys-116 and Cys-193 are joined by a disulfide. A helical transmembrane segment spans residues 119–139; it reads SGFLMGLSVIGSVFSITGIAI. Over 140-158 the chain is Cytoplasmic; sequence NRYCCICHSLRYGKLYSGT. A helical membrane pass occupies residues 159 to 179; that stretch reads NSLCYVFLIWTLTLVAIVPNL. Residues 180 to 203 lie on the Extracellular side of the membrane; the sequence is CVGTLQYDPRIYSCTFTQSVSSAY. The helical transmembrane segment at 204–224 threads the bilayer; sequence TIAVVVFHFIVPMLVVVFCYL. The Cytoplasmic segment spans residues 225-256; sequence RIWALVLQVRWKVKPDNKPKLKPQDFRNFVTM. Residues 257–277 form a helical membrane-spanning segment; sequence FVVFVLFAICWAPLNFIGLVV. Over 278–290 the chain is Extracellular; sequence ASDPASMAPRIPE. A helical membrane pass occupies residues 291–311; sequence WLFVASYYMAYFNSCLNAIIY. The Cytoplasmic segment spans residues 312–366; that stretch reads GLLNQNFRQEYRKIIVSLCTTKMFFVDSSNHVADRIKRKPSPLIANHNLIKVDSV.

This sequence belongs to the G-protein coupled receptor 1 family.

The protein resides in the cell membrane. High affinity receptor for melatonin. Likely to mediate the reproductive and circadian actions of melatonin. The activity of this receptor is mediated by pertussis toxin sensitive G proteins that inhibit adenylate cyclase activity. Possibly involved in sleep induction, by melatonin activation of the potassium channel KCNMA1/BK and the dissociation of G-beta and G-gamma subunits, thereby decreasing synaptic transmission. The sequence is that of Melatonin receptor type 1A (MTNR1A) from Ovis aries (Sheep).